The sequence spans 335 residues: Beta-ketoacyl-[acyl-carrier-protein] synthase III (335 aa).

Catalysis depends on residues Cys116 and His256. Positions 257 to 261 (QANLR) are ACP-binding. Asn286 is an active-site residue.

Belongs to the thiolase-like superfamily. FabH family. As to quaternary structure, homodimer.

Its subcellular location is the cytoplasm. The enzyme catalyses malonyl-[ACP] + acetyl-CoA + H(+) = 3-oxobutanoyl-[ACP] + CO2 + CoA. It functions in the pathway lipid metabolism; fatty acid biosynthesis. Catalyzes the condensation reaction of fatty acid synthesis by the addition to an acyl acceptor of two carbons from malonyl-ACP. Catalyzes the first condensation reaction which initiates fatty acid synthesis and may therefore play a role in governing the total rate of fatty acid production. Possesses both acetoacetyl-ACP synthase and acetyl transacylase activities. Its substrate specificity determines the biosynthesis of branched-chain and/or straight-chain of fatty acids. The polypeptide is Beta-ketoacyl-[acyl-carrier-protein] synthase III (Porphyromonas gingivalis (strain ATCC BAA-308 / W83)).